We begin with the raw amino-acid sequence, 435 residues long: MTSLDPAPNKTWELSLYELQRKPQEVITDSTEIAVSPRSLHSELMCPICLDMLKKTMTTKECLHRFCSDCIVTALRSGNKECPTCRKKLVSKRSLRADPNFDLLISKIYPSREEYEAIQEKVMAKFNQTQSQQALVNSINEGIKLQSQNRPQRFRTKGGGGGGGGGGNGNGAANVAAPPAPGAPTAVGRNASNQMHVHDTASNDSNSNTNSIDRENRDPGHSGTSAASAITSASNAAPSSSANSGASTSATRMQVDDASNPPSVRSTPSPVPSNSSSSKPKRAMSVLTSERSEESESDSQMDCRTEGDSNIDTEGEGNGELGINDEIELVFKPHPTEMSADNQLIRALKENCVRYIKTTANATVDHLSKYLAMRLTLDLGADLPEACRVLNFCIYVAPQPQQLVILNGNQTLHQVNDKFWKVNKPMEMYYSWKKT.

Residues 46–86 (CPICLDMLKKTMTTKECLHRFCSDCIVTALRSGNKECPTCR) form an RING-type zinc finger. Positions 144 to 322 (KLQSQNRPQR…TEGEGNGELG (179 aa)) are disordered. Positions 157 to 170 (KGGGGGGGGGGNGN) are enriched in gly residues. Low complexity-rich tracts occupy residues 171-188 (GAANVAAPPAPGAPTAVG), 202-211 (SNDSNSNTNS), 222-251 (SGTSAASAITSASNAAPSSSANSGASTSAT), and 259-278 (SNPPSVRSTPSPVPSNSSSS). Phosphoserine is present on serine 202. Residue serine 266 is modified to Phosphoserine. Threonine 267 bears the Phosphothreonine mark. The residue at position 269 (serine 269) is a Phosphoserine. A compositionally biased stretch (acidic residues) spans 309-322 (SNIDTEGEGNGELG).

Interacts with ORD. Component of PRC1 complex, which contains many PcG proteins like Pc, ph, Scm, Psc, Sce and also chromatin remodeling proteins such as histone deacetylases. This complex is distinct from the Esc/E(z) complex, at least composed of esc, E(z), Su(z)12, HDAC1/Rpd3 and Caf1-55. The two complexes however cooperate and interact together during the first 3 hours of development to establish PcG silencing. As to expression, ubiquitously expressed in syncytial blastoderm embryos. Ubiquitously expressed until stage 11. Then, it is only expressed in the neuroectoderm. Later in embryonic development, it is only expressed in the CNS. In larvae, it is expressed in all imaginal disks. Expressed in the male and female gonads.

It localises to the nucleus. Its subcellular location is the chromosome. The catalysed reaction is S-ubiquitinyl-[E2 ubiquitin-conjugating enzyme]-L-cysteine + [acceptor protein]-L-lysine = [E2 ubiquitin-conjugating enzyme]-L-cysteine + N(6)-ubiquitinyl-[acceptor protein]-L-lysine.. Its pathway is protein modification; protein ubiquitination. E3 ubiquitin-protein ligase that mediates monoubiquitination of 'Lys-118' of histone H2A, thereby playing a central role in histone code and gene regulation. H2A 'Lys-118' ubiquitination gives a specific tag for epigenetic transcriptional repression. Polycomb group (PcG) protein. PcG proteins act by forming multiprotein complexes, which are required to maintain the transcriptionally repressive state of homeotic genes throughout development. PcG proteins are not required to initiate repression, but to maintain it during later stages of development. PcG complexes act via modification of histones, such as methylation, deacetylation, ubiquitination rendering chromatin heritably changed in its expressibility. May play a role in meiotic sister chromatid cohesion. This chain is E3 ubiquitin-protein ligase RING1 (Sce), found in Drosophila melanogaster (Fruit fly).